We begin with the raw amino-acid sequence, 445 residues long: Probable cytosol aminopeptidase (445 aa).

Mn(2+)-binding residues include lysine 217 and aspartate 222. Lysine 229 is a catalytic residue. Residues aspartate 240, aspartate 299, and glutamate 301 each contribute to the Mn(2+) site. The active site involves arginine 303.

This sequence belongs to the peptidase M17 family. Mn(2+) serves as cofactor.

The protein resides in the cytoplasm. It carries out the reaction Release of an N-terminal amino acid, Xaa-|-Yaa-, in which Xaa is preferably Leu, but may be other amino acids including Pro although not Arg or Lys, and Yaa may be Pro. Amino acid amides and methyl esters are also readily hydrolyzed, but rates on arylamides are exceedingly low.. The enzyme catalyses Release of an N-terminal amino acid, preferentially leucine, but not glutamic or aspartic acids.. Functionally, presumably involved in the processing and regular turnover of intracellular proteins. Catalyzes the removal of unsubstituted N-terminal amino acids from various peptides. The sequence is that of Probable cytosol aminopeptidase (pepA) from Mycoplasma pneumoniae (strain ATCC 29342 / M129 / Subtype 1) (Mycoplasmoides pneumoniae).